Consider the following 407-residue polypeptide: Shaggy-related protein kinase iota (407 aa).

Positions 1–19 are enriched in low complexity; the sequence is MASLPLGPQPHALAPPLQL. The segment at 1-23 is disordered; sequence MASLPLGPQPHALAPPLQLHDGD. Ala2 is modified (N-acetylalanine). The region spanning 70–354 is the Protein kinase domain; that stretch reads YMAERVVGTG…ALEACAHPFF (285 aa). ATP-binding positions include 76–84 and Lys99; that span reads VGTGSFGIV. The active-site Proton acceptor is the Asp195. Tyr230 bears the Phosphotyrosine mark.

This sequence belongs to the protein kinase superfamily. CMGC Ser/Thr protein kinase family. GSK-3 subfamily. In terms of assembly, binds to KIB1. Interacts with BSK6. Post-translationally, autophosphorylated mainly on threonine and serine residues.

The catalysed reaction is L-seryl-[protein] + ATP = O-phospho-L-seryl-[protein] + ADP + H(+). It carries out the reaction L-threonyl-[protein] + ATP = O-phospho-L-threonyl-[protein] + ADP + H(+). Phosphorylates BSK1, BSK3, BSK5, BSK6, BSK8 and BSK11 in vitro. May mediate extracellular signals to regulate transcription in differentiating cells. The protein is Shaggy-related protein kinase iota (ASK9) of Arabidopsis thaliana (Mouse-ear cress).